The sequence spans 412 residues: CinA-like protein (412 aa).

The protein belongs to the CinA family.

The polypeptide is CinA-like protein (Salinibacter ruber (strain DSM 13855 / M31)).